A 36-amino-acid chain; its full sequence is Cecropin-D (36 aa).

Lysine 36 is modified (lysine amide).

This sequence belongs to the cecropin family.

The protein resides in the secreted. Its function is as follows. Cecropins have lytic and antibacterial activity against several Gram-positive and Gram-negative bacteria. In Antheraea pernyi (Chinese oak silk moth), this protein is Cecropin-D.